The primary structure comprises 372 residues: Putative 26S proteasome regulatory subunit homolog MTBMA_c13930 (372 aa).

164–171 contributes to the ATP binding site; sequence GSPGTGKT.

This sequence belongs to the AAA ATPase family.

Its function is as follows. The 26S proteasome is involved in the ATP-dependent degradation of ubiquitinated proteins. The regulatory (or ATPase) complex confers ATP dependency and substrate specificity to the 26S complex. This Methanothermobacter marburgensis (strain ATCC BAA-927 / DSM 2133 / JCM 14651 / NBRC 100331 / OCM 82 / Marburg) (Methanobacterium thermoautotrophicum) protein is Putative 26S proteasome regulatory subunit homolog MTBMA_c13930.